A 1129-amino-acid chain; its full sequence is Regulator of nonsense transcripts 1 (1129 aa).

Positions 1–415 (MSVEAYGPSS…LRSSVGAPVE (415 aa)) are sufficient for interaction with RENT2. A phosphoserine mark is found at Ser10 and Ser31. Positions 39 to 70 (TLPSQTQTPPGGPGGPGGGGAGGPGGAGAGAA) are disordered. Over residues 52-69 (GGPGGGGAGGPGGAGAGA) the composition is skewed to gly residues. The 158-residue stretch at 115–272 (TKDLPIHACS…NKLEELWKEN (158 aa)) folds into the Upf1 CH-rich domain. Residues Cys123, Cys126, Cys137, Ser140, Cys145, His155, His159, Cys165, Cys183, Cys186, Cys209, and Cys213 each coordinate Zn(2+). Residues 123–155 (CSYCGIHDPACVVYCNTSKKWFCNGRGNTSGSH) form a C3H region. The tract at residues 137 to 165 (CNTSKKWFCNGRGNTSGSHIVNHLVRAKC) is CC/SHH/C. Residues 183–213 (CYNCGCRNVFLLGFIPAKADSVVVLLCRQPC) are C4. ATP contacts are provided by residues Gln486 and 506-510 (GTGKT). Residue Ser565 is modified to Phosphoserine. ATP contacts are provided by Gln676, Tyr713, and Glu844. A Phosphoserine modification is found at Ser956. Disordered stretches follow at residues 1009–1058 (FGQA…VASQ) and 1073–1096 (SQPSQMSQPGLSQPELSQDSYLGD). At Arg1019 the chain carries Omega-N-methylarginine. Residues 1025-1034 (KTGRGGRQKN) show a composition bias toward basic residues. Over residues 1041–1058 (PSQTNLPNSQASQDVASQ) the composition is skewed to polar residues. Low complexity predominate over residues 1073–1086 (SQPSQMSQPGLSQP). A phosphoserine mark is found at Ser1089, Ser1107, Ser1110, and Ser1127. Short sequence motifs ([ST]-Q motif) lie at residues 1089–1090 (SQ) and 1107–1108 (SQ). Residues 1110 to 1129 (STYQGERAYQHGGVTGLSQY) form a disordered region.

The protein belongs to the DNA2/NAM7 helicase family. Found in a post-splicing messenger ribonucleoprotein (mRNP) complex. Associates with the exon junction complex (EJC). Associates with the SGM1C complex; is phosphorylated by the complex kinase component SGM1. Part of a complex composed of SMG1, DHX34 and UPF1; within the complex DHX34 acts as a scaffolding protein to facilitate SMG1 phosphorylation of UPF1. Interacts with UPF2. Interacts with UPF3A and UPF3B. Interacts with EST1A. Interacts with SLBP. Interacts (when hyperphosphorylated) with PNRC2. Interacts with AGO1 and AGO2. Interacts with GSPT2. Interacts with isoform 1 and isoform 5 of ADAR/ADAR1. Interacts with SMG7. Interacts with ZC3H12A; this interaction occurs in a mRNA translationally active- and termination-dependent manner and is essential for ZC3H12A-mediated degradation of target mRNAs. Interacts with CPSF6. Interacts with MOV10; the interaction is direct and RNA-dependent. Interacts with SHFL; the interaction increases in the presence of RNA. Interacts with UPF2 and DDX4; interactions are mediated by TDRD6. Interacts with DHX34 and PABPC1/PABP1; the interactions are RNA-independent. Interacts with RBM46. In terms of assembly, (Microbial infection) Interacts with human T-cell leukemia virus 1/HTLV-1 protein Tax; this interaction inhibits the host nonsense-mediated mRNA decay (NMD). Post-translationally, phosphorylated by SMG1; required for formation of mRNA surveillance complexes. Ubiquitous.

The protein resides in the cytoplasm. Its subcellular location is the P-body. The protein localises to the nucleus. It localises to the perinuclear region. The catalysed reaction is ATP + H2O = ADP + phosphate + H(+). Functionally, RNA-dependent helicase required for nonsense-mediated decay (NMD) of aberrant mRNAs containing premature stop codons and modulates the expression level of normal mRNAs. Is recruited to mRNAs upon translation termination and undergoes a cycle of phosphorylation and dephosphorylation; its phosphorylation appears to be a key step in NMD. Recruited by release factors to stalled ribosomes together with the SMG1C protein kinase complex to form the transient SURF (SMG1-UPF1-eRF1-eRF3) complex. In EJC-dependent NMD, the SURF complex associates with the exon junction complex (EJC) (located 50-55 or more nucleotides downstream from the termination codon) through UPF2 and allows the formation of an UPF1-UPF2-UPF3 surveillance complex which is believed to activate NMD. Phosphorylated UPF1 is recognized by EST1B/SMG5, SMG6 and SMG7 which are thought to provide a link to the mRNA degradation machinery involving exonucleolytic and endonucleolytic pathways, and to serve as adapters to protein phosphatase 2A (PP2A), thereby triggering UPF1 dephosphorylation and allowing the recycling of NMD factors. UPF1 can also activate NMD without UPF2 or UPF3, and in the absence of the NMD-enhancing downstream EJC indicative for alternative NMD pathways. Plays a role in replication-dependent histone mRNA degradation at the end of phase S; the function is independent of UPF2. For the recognition of premature termination codons (PTC) and initiation of NMD a competitive interaction between UPF1 and PABPC1 with the ribosome-bound release factors is proposed. The ATPase activity of UPF1 is required for disassembly of mRNPs undergoing NMD. Together with UPF2 and dependent on TDRD6, mediates the degradation of mRNA harboring long 3'UTR by inducing the NMD machinery. Also capable of unwinding double-stranded DNA and translocating on single-stranded DNA. This is Regulator of nonsense transcripts 1 from Homo sapiens (Human).